The chain runs to 113 residues: Large ribosomal subunit protein bL19 (113 aa).

This sequence belongs to the bacterial ribosomal protein bL19 family.

Its function is as follows. This protein is located at the 30S-50S ribosomal subunit interface and may play a role in the structure and function of the aminoacyl-tRNA binding site. The polypeptide is Large ribosomal subunit protein bL19 (Mycolicibacterium vanbaalenii (strain DSM 7251 / JCM 13017 / BCRC 16820 / KCTC 9966 / NRRL B-24157 / PYR-1) (Mycobacterium vanbaalenii)).